The following is an 824-amino-acid chain: Vesicle-fusing ATPase (824 aa).

Residues 582–587 (RGMIVW) and 622–629 (AKTGKTSL) contribute to the ATP site. Residue Thr627 participates in Mg(2+) binding.

This sequence belongs to the AAA ATPase family. In terms of assembly, homohexamer. Requires Mg(2+) as cofactor.

The protein resides in the cytoplasm. The catalysed reaction is ATP + H2O = ADP + phosphate + H(+). In terms of biological role, required for vesicle-mediated transport. Catalyzes the fusion of transport vesicles within the Golgi cisternae. Is also required for transport from the endoplasmic reticulum to the Golgi stack. Seems to function as a fusion protein required for the delivery of cargo proteins to all compartments of the Golgi stack independent of vesicle origin. In Caenorhabditis elegans, this protein is Vesicle-fusing ATPase (nsf-1).